Here is a 352-residue protein sequence, read N- to C-terminus: Protein RecA (352 aa).

65–72 lines the ATP pocket; sequence GPESSGKT.

The protein belongs to the RecA family.

Its subcellular location is the cytoplasm. In terms of biological role, can catalyze the hydrolysis of ATP in the presence of single-stranded DNA, the ATP-dependent uptake of single-stranded DNA by duplex DNA, and the ATP-dependent hybridization of homologous single-stranded DNAs. It interacts with LexA causing its activation and leading to its autocatalytic cleavage. This Pseudomonas fluorescens (strain SBW25) protein is Protein RecA.